The sequence spans 477 residues: MKNILFVTSECTPFIKTGGLADVSGSLPQALQEHGGMEVRVMLPLYDEIDRSWKDQFEFVCAFTVSLGWREQTAELYRYRYNDVTYYFIGNDYYFTRKGIYGYYDDGERFVFFSQAIIASLEYIDFIPSVLHAHDWQTGIAVALAKIYQPIEELITVFTIHNIYYQGTMPLTTFDDFFQLGREHLAGMEWNQMINSLKSGIFHADKITTVSPTYAEEILTPYYGAGLEEMLWNRREDLIGVLNGIDLKDYNPAIDKSLPVNYRSARSKKIENRKLLYEEIGLNLKDGVPLYIMVTRLVEQKGIHLVQRILEEFLQEDIQLIVLGNGEQEFEYYFKDIEYRYPDKMITHLHFNESLARRLYASADFLLMPSKFEPCGLSQLIALQYKTVPIVRETGGLKDTIIAFNEITGEGNGFRFANYNAHELLHVLKYSLEIYQQPSLWSVLIKNVNKSKFSWKDSASAYADVYQQLDASSVSYK.

Lys16 is a binding site for ADP-alpha-D-glucose.

This sequence belongs to the glycosyltransferase 1 family. Bacterial/plant glycogen synthase subfamily.

It carries out the reaction [(1-&gt;4)-alpha-D-glucosyl](n) + ADP-alpha-D-glucose = [(1-&gt;4)-alpha-D-glucosyl](n+1) + ADP + H(+). Its pathway is glycan biosynthesis; glycogen biosynthesis. Functionally, synthesizes alpha-1,4-glucan chains using ADP-glucose. In Oceanobacillus iheyensis (strain DSM 14371 / CIP 107618 / JCM 11309 / KCTC 3954 / HTE831), this protein is Glycogen synthase.